The following is a 220-amino-acid chain: Redox-sensing transcriptional repressor Rex (220 aa).

Residues 16-55 (MYVQVLETLKREGSQVVSSELLARTCSVNPSQIRKDLAYF) constitute a DNA-binding region (H-T-H motif). 90 to 95 (GIGNLG) lines the NAD(+) pocket.

Belongs to the transcriptional regulatory Rex family. As to quaternary structure, homodimer.

The protein localises to the cytoplasm. Modulates transcription in response to changes in cellular NADH/NAD(+) redox state. The protein is Redox-sensing transcriptional repressor Rex of Solidesulfovibrio magneticus (strain ATCC 700980 / DSM 13731 / RS-1) (Desulfovibrio magneticus).